Reading from the N-terminus, the 331-residue chain is Ribosomal RNA small subunit methyltransferase H (331 aa).

S-adenosyl-L-methionine is bound by residues 38–40, D56, F83, D100, and Q107; that span reads GGY. The disordered stretch occupies residues 308–331; the sequence is TDAPAGPVDPQVLGMPLIPKKGRR.

Belongs to the methyltransferase superfamily. RsmH family.

The protein resides in the cytoplasm. It carries out the reaction cytidine(1402) in 16S rRNA + S-adenosyl-L-methionine = N(4)-methylcytidine(1402) in 16S rRNA + S-adenosyl-L-homocysteine + H(+). Specifically methylates the N4 position of cytidine in position 1402 (C1402) of 16S rRNA. The polypeptide is Ribosomal RNA small subunit methyltransferase H (Cereibacter sphaeroides (strain ATCC 17025 / ATH 2.4.3) (Rhodobacter sphaeroides)).